A 209-amino-acid polypeptide reads, in one-letter code: Octanoyltransferase (209 aa).

Residues 28 to 203 (NATPETLLLL…RFQGLLDEWL (176 aa)) enclose the BPL/LPL catalytic domain. Residues 66-73 (RGGDVTFH), 133-135 (AIG), and 146-148 (GFA) contribute to the substrate site. The Acyl-thioester intermediate role is filled by Cys-164.

Belongs to the LipB family.

The protein resides in the cytoplasm. It carries out the reaction octanoyl-[ACP] + L-lysyl-[protein] = N(6)-octanoyl-L-lysyl-[protein] + holo-[ACP] + H(+). Its pathway is protein modification; protein lipoylation via endogenous pathway; protein N(6)-(lipoyl)lysine from octanoyl-[acyl-carrier-protein]: step 1/2. In terms of biological role, catalyzes the transfer of endogenously produced octanoic acid from octanoyl-acyl-carrier-protein onto the lipoyl domains of lipoate-dependent enzymes. Lipoyl-ACP can also act as a substrate although octanoyl-ACP is likely to be the physiological substrate. This is Octanoyltransferase from Pelobacter propionicus (strain DSM 2379 / NBRC 103807 / OttBd1).